Reading from the N-terminus, the 183-residue chain is Small ribosomal subunit protein uS4 (183 aa).

The region spanning 106-168 (RRLQTQVYRQ…AGSPLAREGH (63 aa)) is the S4 RNA-binding domain.

This sequence belongs to the universal ribosomal protein uS4 family. As to quaternary structure, part of the 30S ribosomal subunit. Contacts protein S5. The interaction surface between S4 and S5 is involved in control of translational fidelity.

Its function is as follows. One of the primary rRNA binding proteins, it binds directly to 16S rRNA where it nucleates assembly of the body of the 30S subunit. In terms of biological role, with S5 and S12 plays an important role in translational accuracy. The sequence is that of Small ribosomal subunit protein uS4 from Methanothrix thermoacetophila (strain DSM 6194 / JCM 14653 / NBRC 101360 / PT) (Methanosaeta thermophila).